The following is a 170-amino-acid chain: uncharacterized protein (170 aa).

The stretch at 15 to 81 (EAFDEKAEKE…EREKSKSAVS (67 aa)) forms a coiled coil. Basic and acidic residues predominate over residues 20 to 77 (KAEKEKVEKEKALKEKTEKEKAEKEKAEKEKVEKEKAEKEKAAKEKAAKEKAEREKSK). The interval 20–95 (KAEKEKVEKE…NQNSNKGNVE (76 aa)) is disordered. The span at 78 to 92 (SAVSPATTNQNSNKG) shows a compositional bias: polar residues. Residues 98-118 (VAIGVLAGGAVTGVAVGGAYL) form a helical membrane-spanning segment.

The protein resides in the membrane. This is an uncharacterized protein from Dictyostelium discoideum (Social amoeba).